Reading from the N-terminus, the 490-residue chain is Probable cytosol aminopeptidase (490 aa).

The Mn(2+) site is built by Lys-255 and Asp-260. Residue Lys-267 is part of the active site. 3 residues coordinate Mn(2+): Asp-278, Asp-337, and Glu-339. Arg-341 is an active-site residue.

The protein belongs to the peptidase M17 family. The cofactor is Mn(2+).

It localises to the cytoplasm. The enzyme catalyses Release of an N-terminal amino acid, Xaa-|-Yaa-, in which Xaa is preferably Leu, but may be other amino acids including Pro although not Arg or Lys, and Yaa may be Pro. Amino acid amides and methyl esters are also readily hydrolyzed, but rates on arylamides are exceedingly low.. The catalysed reaction is Release of an N-terminal amino acid, preferentially leucine, but not glutamic or aspartic acids.. Presumably involved in the processing and regular turnover of intracellular proteins. Catalyzes the removal of unsubstituted N-terminal amino acids from various peptides. This is Probable cytosol aminopeptidase from Gluconobacter oxydans (strain 621H) (Gluconobacter suboxydans).